Here is a 342-residue protein sequence, read N- to C-terminus: Uroporphyrinogen decarboxylase (342 aa).

Residues Arg24–Arg28, Asp74, Tyr151, Ser206, and His322 each bind substrate.

Belongs to the uroporphyrinogen decarboxylase family. In terms of assembly, homodimer.

It localises to the cytoplasm. The enzyme catalyses uroporphyrinogen III + 4 H(+) = coproporphyrinogen III + 4 CO2. The protein operates within porphyrin-containing compound metabolism; protoporphyrin-IX biosynthesis; coproporphyrinogen-III from 5-aminolevulinate: step 4/4. Functionally, catalyzes the decarboxylation of four acetate groups of uroporphyrinogen-III to yield coproporphyrinogen-III. This is Uroporphyrinogen decarboxylase from Paracoccus denitrificans (strain Pd 1222).